A 141-amino-acid chain; its full sequence is Ribonuclease VapC16 (141 aa).

Asp99 is a Mg(2+) binding site. The segment at 99–141 (DHAHTAHRRASGSPSTSIRPCAHRPGTAAWPDDHHRRRPVSCL) is disordered.

Belongs to the PINc/VapC protein family. Requires Mg(2+) as cofactor.

In terms of biological role, toxic component of a type II toxin-antitoxin (TA) system. An RNase. The cognate antitoxin is VapB16. The polypeptide is Ribonuclease VapC16 (Mycobacterium tuberculosis (strain ATCC 25618 / H37Rv)).